We begin with the raw amino-acid sequence, 1493 residues long: Mitogen-activated protein kinase kinase kinase 1 (1493 aa).

A compositionally biased stretch (low complexity) spans 1–23 (MAAAAGDRASSSGFPGAAAASPE). Disordered stretches follow at residues 1 to 178 (MAAA…PEER) and 194 to 300 (HEWL…EETS). A2 carries the post-translational modification N-acetylalanine. Phosphoserine is present on S21. Residues 24 to 35 (AGGGGGGGGALQ) are compositionally biased toward gly residues. The segment covering 36–46 (GSGAPAAGAAG) has biased composition (low complexity). The span at 89 to 99 (PPCPSTSPSPE) shows a compositional bias: pro residues. A compositionally biased stretch (low complexity) spans 140-156 (ARSPAGAEPPSAAAPSG). A Phosphoserine modification is found at S142. The segment covering 157 to 178 (REMENKETLKGLHKMEDRPEER) has biased composition (basic and acidic residues). Residues 235–256 (SAAPAPKGRRSPSPGSSPSGRS) are compositionally biased toward low complexity. A Phosphoserine modification is found at S270. T280 is subject to Phosphothreonine. Residues S287, S292, and S295 each carry the phosphoserine modification. The segment at 333–361 (YRVFIGPQNCSCGRGAFCIHLLFVMLRVF) adopts an SWIM-type zinc-finger fold. Low complexity predominate over residues 411–428 (SNSHTLSSSSTSTSSSEN). Positions 411–431 (SNSHTLSSSSTSTSSSENSIK) are disordered. The segment at 438–487 (CPICLLGMLDEESLTVCEDGCRNKLHHHCMSIWAEECRRNREPLICPLCR) adopts an RING-type zinc-finger fold. Phosphoserine occurs at positions 502 and 526. Disordered regions lie at residues 506-531 (SPAS…RRNQ) and 895-914 (EHTV…RLSA). Over residues 512–527 (AVQQPSSPQQPVAGSQ) the composition is skewed to low complexity. Residue S915 is modified to Phosphoserine. 2 disordered regions span residues 927 to 957 (SVGL…LNSS) and 992 to 1066 (PCKI…TLDL). A compositionally biased stretch (polar residues) spans 998 to 1013 (ASPQTQRKFSLQFQRN). 2 positions are modified to phosphoserine: S999 and S1024. Positions 1049–1063 (GSTSKLGDATKSSMT) are enriched in polar residues. The Protein kinase domain occupies 1224 to 1489 (WLKGQQIGLG…SRELLKHPVF (266 aa)). ATP is bound by residues 1230 to 1238 (IGLGAFSSC) and K1253. The active-site Proton acceptor is D1350. A phosphothreonine; by autocatalysis mark is found at T1381 and T1393.

Belongs to the protein kinase superfamily. STE Ser/Thr protein kinase family. MAP kinase kinase kinase subfamily. In terms of assembly, binds both upstream activators and downstream substrates in multimolecular complexes through its N-terminus. Oligomerizes after binding MAP4K2 or TRAF2. Interacts with AXIN1. Interacts (via the kinase catalytic domain) with STK38. Interacts with GRIPAP1. The cofactor is Mg(2+). Autophosphorylated. In terms of tissue distribution, highly expressed in the heart and spleen while a lower level expression is seen in the liver.

It catalyses the reaction L-seryl-[protein] + ATP = O-phospho-L-seryl-[protein] + ADP + H(+). The catalysed reaction is L-threonyl-[protein] + ATP = O-phospho-L-threonyl-[protein] + ADP + H(+). Activated by autophosphorylation on Thr-1381 and Thr-1393 following oligomerization. Its function is as follows. Component of a protein kinase signal transduction cascade. Activates the ERK and JNK kinase pathways by phosphorylation of MAP2K1 and MAP2K4. May phosphorylate the MAPK8/JNK1 kinase. Activates CHUK and IKBKB, the central protein kinases of the NF-kappa-B pathway. In Mus musculus (Mouse), this protein is Mitogen-activated protein kinase kinase kinase 1 (Map3k1).